We begin with the raw amino-acid sequence, 688 residues long: Translation initiation factor IF-2 (688 aa).

The span at Leu-50–Glu-62 shows a compositional bias: basic and acidic residues. The segment at Leu-50–Asn-95 is disordered. Positions Lys-72–Lys-82 are enriched in low complexity. Positions Lys-86–Asn-95 are enriched in basic and acidic residues. The tr-type G domain maps to Lys-187–Glu-354. The segment at Gly-196–Thr-203 is G1. Residue Gly-196–Thr-203 participates in GTP binding. Positions Gly-221–His-225 are G2. The segment at Asp-242–Gly-245 is G3. Residues Asp-242–His-246 and Asn-296–Asp-299 contribute to the GTP site. Positions Asn-296–Asp-299 are G4. Residues Ser-332–His-334 are G5.

Belongs to the TRAFAC class translation factor GTPase superfamily. Classic translation factor GTPase family. IF-2 subfamily.

The protein localises to the cytoplasm. In terms of biological role, one of the essential components for the initiation of protein synthesis. Protects formylmethionyl-tRNA from spontaneous hydrolysis and promotes its binding to the 30S ribosomal subunits. Also involved in the hydrolysis of GTP during the formation of the 70S ribosomal complex. The protein is Translation initiation factor IF-2 of Clostridium botulinum (strain 657 / Type Ba4).